The following is a 90-amino-acid chain: Probable Fe(2+)-trafficking protein (90 aa).

Belongs to the Fe(2+)-trafficking protein family.

In terms of biological role, could be a mediator in iron transactions between iron acquisition and iron-requiring processes, such as synthesis and/or repair of Fe-S clusters in biosynthetic enzymes. The chain is Probable Fe(2+)-trafficking protein from Bordetella bronchiseptica (strain ATCC BAA-588 / NCTC 13252 / RB50) (Alcaligenes bronchisepticus).